A 362-amino-acid polypeptide reads, in one-letter code: Alternative oxidase, mitochondrial (362 aa).

The N-terminal 64 residues, 1 to 64 (MNTPKVNILY…RGFTTTSVVR (64 aa)), are a transit peptide targeting the mitochondrion. The helical transmembrane segment at 156–176 (LVRFIFLESIAGVPGMVAGML) threads the bilayer. Glu163, Glu202, and His205 together coordinate Fe cation. The chain crosses the membrane as a helical span at residues 222–242 (LILGAQGVFFNAMFLSYLVSP). Fe cation is bound by residues Glu253, Glu310, and His313.

It belongs to the alternative oxidase family. It depends on Fe cation as a cofactor.

Its subcellular location is the mitochondrion inner membrane. In terms of biological role, catalyzes cyanide-resistant oxygen consumption. May increase respiration when the cytochrome respiratory pathway is restricted, or in response to low temperatures. The chain is Alternative oxidase, mitochondrial (aod-1) from Gelasinospora sp. (strain S23).